A 409-amino-acid chain; its full sequence is Carbamoyl phosphate synthase arginine-specific small chain (409 aa).

Positions asparagine 197–leucine 389 constitute a Glutamine amidotransferase type-1 domain. The active-site Nucleophile is cysteine 277. Residues histidine 362 and glutamate 364 contribute to the active site.

The protein belongs to the CarA family. In terms of assembly, heterodimer composed of 2 chains; the small (or glutamine) chain promotes the hydrolysis of glutamine to ammonia, which is used by the large (or ammonia) chain to synthesize carbamoyl phosphate.

The protein localises to the cytoplasm. It catalyses the reaction hydrogencarbonate + L-glutamine + 2 ATP + H2O = carbamoyl phosphate + L-glutamate + 2 ADP + phosphate + 2 H(+). The catalysed reaction is L-glutamine + H2O = L-glutamate + NH4(+). It functions in the pathway amino-acid biosynthesis; L-arginine biosynthesis; carbamoyl phosphate from bicarbonate: step 1/1. Functionally, small subunit of the arginine-specific carbamoyl phosphate synthase (CPSase). CPSase catalyzes the formation of carbamoyl phosphate from the ammonia moiety of glutamine, carbonate, and phosphate donated by ATP, constituting the first step of 2 biosynthetic pathways, one leading to arginine and/or urea and the other to pyrimidine nucleotides. The small subunit (glutamine amidotransferase) binds and cleaves glutamine to supply the large subunit with the substrate ammonia. This chain is Carbamoyl phosphate synthase arginine-specific small chain (CPA1), found in Kluyveromyces lactis (strain ATCC 8585 / CBS 2359 / DSM 70799 / NBRC 1267 / NRRL Y-1140 / WM37) (Yeast).